A 157-amino-acid polypeptide reads, in one-letter code: SsrA-binding protein (157 aa).

The protein belongs to the SmpB family.

The protein resides in the cytoplasm. Required for rescue of stalled ribosomes mediated by trans-translation. Binds to transfer-messenger RNA (tmRNA), required for stable association of tmRNA with ribosomes. tmRNA and SmpB together mimic tRNA shape, replacing the anticodon stem-loop with SmpB. tmRNA is encoded by the ssrA gene; the 2 termini fold to resemble tRNA(Ala) and it encodes a 'tag peptide', a short internal open reading frame. During trans-translation Ala-aminoacylated tmRNA acts like a tRNA, entering the A-site of stalled ribosomes, displacing the stalled mRNA. The ribosome then switches to translate the ORF on the tmRNA; the nascent peptide is terminated with the 'tag peptide' encoded by the tmRNA and targeted for degradation. The ribosome is freed to recommence translation, which seems to be the essential function of trans-translation. The sequence is that of SsrA-binding protein from Chlorobaculum tepidum (strain ATCC 49652 / DSM 12025 / NBRC 103806 / TLS) (Chlorobium tepidum).